Reading from the N-terminus, the 142-residue chain is Universal stress protein C (142 aa).

This sequence belongs to the universal stress protein A family.

It localises to the cytoplasm. Functionally, required for resistance to DNA-damaging agents. In Escherichia coli O157:H7, this protein is Universal stress protein C (uspC).